Reading from the N-terminus, the 2524-residue chain is Highly reducing polyketide synthase Preu5 (2524 aa).

In terms of domain architecture, Ketosynthase family 3 (KS3) spans 5 to 426 (DTPIAIIGLS…GSNSAIVIEK (422 aa)). Residues C175, H310, and H350 each act as for beta-ketoacyl synthase activity in the active site. The interval 431–470 (DELGHETNGTNGVSVSNGVNGSNGFTNGSNGTNGHAENGN) is disordered. Positions 437–464 (TNGTNGVSVSNGVNGSNGFTNGSNGTNG) are enriched in low complexity. The malonyl-CoA:ACP transacylase (MAT) domain stretch occupies residues 559 to 882 (VFTGQGAQYA…TYLPSLVRNV (324 aa)). Catalysis depends on S648, which acts as the For malonyltransferase activity. The segment at 950-1084 (HELLGRRVVS…GQIEPEFADM (135 aa)) is N-terminal hotdog fold. The 315-residue stretch at 950–1264 (HELLGRRVVS…FRNIGSADEN (315 aa)) folds into the PKS/mFAS DH domain. The dehydratase (DH) domain stretch occupies residues 950–1266 (HELLGRRVVS…NIGSADENID (317 aa)). H982 (proton acceptor; for dehydratase activity) is an active-site residue. The interval 1102-1264 (ADLLEHDIEG…FRNIGSADEN (163 aa)) is C-terminal hotdog fold. The Proton donor; for dehydratase activity role is filled by D1171. The interval 1418 to 1611 (SQAVGDLADN…IPGVWDSEVQ (194 aa)) is methyltransferase (CMet) domain. The segment at 1825–2139 (GSPDSIYFRR…SGDHLGKIVV (315 aa)) is enoylreductase (ER) domain. Positions 2164–2339 (GTYLVTGGTR…HTVSIALPIV (176 aa)) are ketoreductase (KR) domain. One can recognise a Carrier domain in the interval 2445 to 2522 (DPLEGLTEAL…ALATDILSQR (78 aa)). The residue at position 2482 (S2482) is an O-(pantetheine 4'-phosphoryl)serine.

Pantetheine 4'-phosphate serves as cofactor.

Its function is as follows. Highly reducing polyketide synthase; part of a gene cluster that mediates the biosynthesis of a yet unidentified natural product. The polypeptide is Highly reducing polyketide synthase Preu5 (Preussia isomera (Coprophilous fungus)).